The following is a 390-amino-acid chain: ATP-sensitive inward rectifier potassium channel 11 (390 aa).

Topologically, residues 1–65 (MLSRKGIIPE…LQDVFTTLVD (65 aa)) are cytoplasmic. ATP is bound by residues Asn48 and Arg50. Residues 66–92 (LKWTHTLLIFTMSFLCSWLLFAMVWWL) traverse the membrane as a helical segment. The Extracellular segment spans residues 93–116 (IAFAHGDLAPGEGAAVPCVTSIHS). The cysteines at positions 110 and 142 are disulfide-linked. The segment at residues 117–133 (FSSAFLFSIEVQVTIGF) is an intramembrane region (discontinuously helical; Pore-forming). Thr130 and Phe133 together coordinate K(+). The short motif at 130–135 (TIGFGG) is the Selectivity filter element. The Extracellular segment spans residues 134–142 (GGRMVTEEC). A helical transmembrane segment spans residues 143–171 (PLAILILIVQNIVGLMINAIMLGCIFMKT). At 172–390 (AQAHRRAETL…KFSISPDSLS (219 aa)) the chain is on the cytoplasmic side. Residue Arg176 participates in a 1,2-diacyl-sn-glycero-3-phospho-(1D-myo-inositol-4,5-bisphosphate) binding. Tyr330 serves as a coordination point for ATP. Phosphothreonine; by MAPK1 is present on Thr341. Ser385 is subject to Phosphoserine; by MAPK1.

The protein belongs to the inward rectifier-type potassium channel (TC 1.A.2.1) family. KCNJ11 subfamily. Homotetramer; the homotetramer binds four ATP molecules (one ATP per subunit). Forms an heterooctamer with ABCC8/SUR1; one KCNJ11 homotetramer interacts with four ABCC8/SUR1 molecules. Interacts with ABCC9/SUR2. Post-translationally, phosphorylation by MAPK1 results in changes in channel gating that destabilize the closed states and reduce the ATP sensitivity.

Its subcellular location is the membrane. The catalysed reaction is K(+)(in) = K(+)(out). KATP channels are regulated by cytoplasmic ATP/ADP ratios; ATP inhibits the channel by closing the pore, while ADP activates the channel. Activated by phosphatidylinositol 4,5-biphosphate (PtdIns(4,5)P2). Its function is as follows. Inward rectifier potassium channel that forms the pore of ATP-sensitive potassium channels (KATP), regulating potassium permeability as a function of cytoplasmic ATP and ADP concentrations in many different cells. Inward rectifier potassium channels are characterized by a greater tendency to allow potassium to flow into the cell rather than out of it. Their voltage dependence is regulated by the concentration of extracellular potassium; as external potassium is raised, the voltage range of the channel opening shifts to more positive voltages. The inward rectification is mainly due to the blockage of outward current by internal magnesium. Can be blocked by extracellular barium. In pancreatic cells, it forms KATP channels with ABCC8/SUR1. Can form cardiac and smooth muscle-type KATP channels with ABCC9. This Oryctolagus cuniculus (Rabbit) protein is ATP-sensitive inward rectifier potassium channel 11 (KCNJ11).